A 264-amino-acid chain; its full sequence is 3-methyl-2-oxobutanoate hydroxymethyltransferase (264 aa).

Residues D45 and D84 each coordinate Mg(2+). 3-methyl-2-oxobutanoate contacts are provided by residues 45-46, D84, and K112; that span reads DS. Mg(2+) is bound at residue E114. Catalysis depends on E181, which acts as the Proton acceptor.

This sequence belongs to the PanB family. As to quaternary structure, homodecamer; pentamer of dimers. Mg(2+) is required as a cofactor.

Its subcellular location is the cytoplasm. It catalyses the reaction 3-methyl-2-oxobutanoate + (6R)-5,10-methylene-5,6,7,8-tetrahydrofolate + H2O = 2-dehydropantoate + (6S)-5,6,7,8-tetrahydrofolate. The protein operates within cofactor biosynthesis; (R)-pantothenate biosynthesis; (R)-pantoate from 3-methyl-2-oxobutanoate: step 1/2. In terms of biological role, catalyzes the reversible reaction in which hydroxymethyl group from 5,10-methylenetetrahydrofolate is transferred onto alpha-ketoisovalerate to form ketopantoate. In Escherichia coli O127:H6 (strain E2348/69 / EPEC), this protein is 3-methyl-2-oxobutanoate hydroxymethyltransferase.